The primary structure comprises 701 residues: Polyribonucleotide nucleotidyltransferase (701 aa).

2 residues coordinate Mg(2+): Asp487 and Asp493. The 60-residue stretch at 554–613 (PTMIAMKIDTDKIRDVIGKGGATIRAICEETKASIDIEDDGSIKIFGETKEAAEAARQRV) folds into the KH domain. One can recognise an S1 motif domain in the interval 623–691 (GKIYVGKVER…NRGRIKLSIK (69 aa)).

This sequence belongs to the polyribonucleotide nucleotidyltransferase family. In terms of assembly, component of the RNA degradosome, which is a multiprotein complex involved in RNA processing and mRNA degradation. Mg(2+) serves as cofactor.

Its subcellular location is the cytoplasm. It catalyses the reaction RNA(n+1) + phosphate = RNA(n) + a ribonucleoside 5'-diphosphate. Its function is as follows. Involved in mRNA degradation. Catalyzes the phosphorolysis of single-stranded polyribonucleotides processively in the 3'- to 5'-direction. The sequence is that of Polyribonucleotide nucleotidyltransferase from Pseudomonas fluorescens (strain SBW25).